Consider the following 433-residue polypeptide: uncharacterized protein (433 aa).

In terms of domain architecture, Radical SAM core spans 104–349 (ERGRNIIQVR…ELEYKKKGIE (246 aa)). Cys118, Cys122, and Cys125 together coordinate [4Fe-4S] cluster. Residues 171-172 (GE) and 236-238 (MLS) each bind S-adenosyl-L-methionine. The TRAM domain occupies 370–433 (PFKVGEVTKV…KDNIIVAELV (64 aa)).

Belongs to the radical SAM superfamily. It depends on [4Fe-4S] cluster as a cofactor.

This is an uncharacterized protein from Methanocaldococcus jannaschii (strain ATCC 43067 / DSM 2661 / JAL-1 / JCM 10045 / NBRC 100440) (Methanococcus jannaschii).